The sequence spans 373 residues: Chaperone protein DnaJ (373 aa).

Residues 5-70 (DYYELLEVDR…EKRALYDQYG (66 aa)) form the J domain. The segment at 134–211 (GTQKEVHYSF…CSGKGYRIEK (78 aa)) adopts a CR-type zinc-finger fold. Zn(2+) is bound by residues C147, C150, C163, C166, C185, C188, C199, and C202. CXXCXGXG motif repeat units follow at residues 147-154 (CSACKGTG), 163-170 (CPECHGRG), 185-192 (CPRCHGQG), and 199-206 (CEECSGKG).

Belongs to the DnaJ family. In terms of assembly, homodimer. The cofactor is Zn(2+).

Its subcellular location is the cytoplasm. Participates actively in the response to hyperosmotic and heat shock by preventing the aggregation of stress-denatured proteins and by disaggregating proteins, also in an autonomous, DnaK-independent fashion. Unfolded proteins bind initially to DnaJ; upon interaction with the DnaJ-bound protein, DnaK hydrolyzes its bound ATP, resulting in the formation of a stable complex. GrpE releases ADP from DnaK; ATP binding to DnaK triggers the release of the substrate protein, thus completing the reaction cycle. Several rounds of ATP-dependent interactions between DnaJ, DnaK and GrpE are required for fully efficient folding. Also involved, together with DnaK and GrpE, in the DNA replication of plasmids through activation of initiation proteins. In Nitratiruptor sp. (strain SB155-2), this protein is Chaperone protein DnaJ.